Consider the following 423-residue polypeptide: Putative competence-damage inducible protein (423 aa).

It belongs to the CinA family.

In Streptococcus pyogenes serotype M49 (strain NZ131), this protein is Putative competence-damage inducible protein.